A 408-amino-acid chain; its full sequence is Histidine--tRNA ligase (408 aa).

Belongs to the class-II aminoacyl-tRNA synthetase family.

It is found in the cytoplasm. It carries out the reaction tRNA(His) + L-histidine + ATP = L-histidyl-tRNA(His) + AMP + diphosphate + H(+). This chain is Histidine--tRNA ligase, found in Methanospirillum hungatei JF-1 (strain ATCC 27890 / DSM 864 / NBRC 100397 / JF-1).